The following is a 446-amino-acid chain: Iron-sulfur cluster assembly SufBD family protein PH1385 (446 aa).

Belongs to the iron-sulfur cluster assembly SufBD family.

This chain is Iron-sulfur cluster assembly SufBD family protein PH1385, found in Pyrococcus horikoshii (strain ATCC 700860 / DSM 12428 / JCM 9974 / NBRC 100139 / OT-3).